Here is a 347-residue protein sequence, read N- to C-terminus: MKTEKEIHQHRKDEHLSLAYKYWREEKNQTSGLTFSDSRIIPNSLPELSTKKINFSSEVFGQNFEFPFYIEAMTGGTERADKINAQLAEIAKNQHLAMAVGSQSIALKFPELAAGFSEVRKIHSSGFLFANIGAGHSLENAKRAVDMIEANALEIHVNTAQELPMDEGDREFYWLENINEIASQLEVPVVVKEVGFGISQKTFKALAKTSVSGINIGGAGGTNFAWIERKRSKNGFNLDEFGLSTLESLLEAKMADNRKSLIATGGITSAQEIFKSLILGADLSSSAGFILKNLMQTGPEKVEEVIEQWKQDLNKLFVLTGSKNIEECRKVELLYSINMLNFIQQRK.

Substrate is bound at residue 11–12 (RK). FMN contacts are provided by residues 72-74 (AMT), Ser-102, and Asn-131. Gln-161 contacts substrate. Glu-162 contributes to the Mg(2+) binding site. FMN-binding positions include Lys-192, Thr-222, and 287-288 (AG).

The protein belongs to the IPP isomerase type 2 family. As to quaternary structure, homooctamer. Dimer of tetramers. Requires FMN as cofactor. The cofactor is NADPH. Mg(2+) is required as a cofactor.

It is found in the cytoplasm. It carries out the reaction isopentenyl diphosphate = dimethylallyl diphosphate. Its function is as follows. Involved in the biosynthesis of isoprenoids. Catalyzes the 1,3-allylic rearrangement of the homoallylic substrate isopentenyl (IPP) to its allylic isomer, dimethylallyl diphosphate (DMAPP). This chain is Isopentenyl-diphosphate delta-isomerase, found in Lactococcus lactis subsp. lactis (strain IL1403) (Streptococcus lactis).